Consider the following 559-residue polypeptide: Phenylalanine--tRNA ligase beta subunit (559 aa).

In terms of domain architecture, B5 spans 274-350; it reads FEPKIIDVHT…LGYGFNELPA (77 aa). Mg(2+)-binding residues include Asp-328, Asp-334, Glu-337, and Asn-338.

The protein belongs to the phenylalanyl-tRNA synthetase beta subunit family. Type 2 subfamily. In terms of assembly, tetramer of two alpha and two beta subunits. The cofactor is Mg(2+).

The protein resides in the cytoplasm. The catalysed reaction is tRNA(Phe) + L-phenylalanine + ATP = L-phenylalanyl-tRNA(Phe) + AMP + diphosphate + H(+). The chain is Phenylalanine--tRNA ligase beta subunit from Methanosphaera stadtmanae (strain ATCC 43021 / DSM 3091 / JCM 11832 / MCB-3).